The sequence spans 353 residues: Ribosomal RNA large subunit methyltransferase M (353 aa).

Residues S183, 216-219, D235, D255, and D271 each bind S-adenosyl-L-methionine; that span reads APGG. Residue K300 is the Proton acceptor of the active site.

The protein belongs to the class I-like SAM-binding methyltransferase superfamily. RNA methyltransferase RlmE family. RlmM subfamily. In terms of assembly, monomer.

Its subcellular location is the cytoplasm. It carries out the reaction cytidine(2498) in 23S rRNA + S-adenosyl-L-methionine = 2'-O-methylcytidine(2498) in 23S rRNA + S-adenosyl-L-homocysteine + H(+). Catalyzes the 2'-O-methylation at nucleotide C2498 in 23S rRNA. The sequence is that of Ribosomal RNA large subunit methyltransferase M from Azotobacter vinelandii (strain DJ / ATCC BAA-1303).